A 106-amino-acid chain; its full sequence is UPF0060 membrane protein CHU_3331 (106 aa).

Transmembrane regions (helical) follow at residues 5–25 (FYFI…WLHF), 31–51 (ALLL…LTKI), 59–79 (AYAV…YGIE), and 85–105 (IWDY…LFAP).

This sequence belongs to the UPF0060 family.

Its subcellular location is the cell inner membrane. The chain is UPF0060 membrane protein CHU_3331 from Cytophaga hutchinsonii (strain ATCC 33406 / DSM 1761 / CIP 103989 / NBRC 15051 / NCIMB 9469 / D465).